A 500-amino-acid polypeptide reads, in one-letter code: L-arabinose isomerase (500 aa).

Mn(2+) is bound by residues glutamate 306, glutamate 333, histidine 350, and histidine 450.

The protein belongs to the arabinose isomerase family. In terms of assembly, homohexamer. Mn(2+) is required as a cofactor.

It catalyses the reaction beta-L-arabinopyranose = L-ribulose. It functions in the pathway carbohydrate degradation; L-arabinose degradation via L-ribulose; D-xylulose 5-phosphate from L-arabinose (bacterial route): step 1/3. Its function is as follows. Catalyzes the conversion of L-arabinose to L-ribulose. In Escherichia coli (strain 55989 / EAEC), this protein is L-arabinose isomerase.